We begin with the raw amino-acid sequence, 127 residues long: Large ribosomal subunit protein bL12 (127 aa).

N6-methyllysine is present on residues K77 and K88.

The protein belongs to the bacterial ribosomal protein bL12 family. As to quaternary structure, homodimer. Part of the ribosomal stalk of the 50S ribosomal subunit. Forms a multimeric L10(L12)X complex, where L10 forms an elongated spine to which 2 to 4 L12 dimers bind in a sequential fashion. Binds GTP-bound translation factors.

Forms part of the ribosomal stalk which helps the ribosome interact with GTP-bound translation factors. Is thus essential for accurate translation. This is Large ribosomal subunit protein bL12 from Nitratidesulfovibrio vulgaris (strain DSM 19637 / Miyazaki F) (Desulfovibrio vulgaris).